The sequence spans 158 residues: NADH-quinone oxidoreductase subunit B (158 aa).

[4Fe-4S] cluster is bound by residues C37, C38, C102, and C132.

It belongs to the complex I 20 kDa subunit family. NDH-1 is composed of 14 different subunits. Subunits NuoB, C, D, E, F, and G constitute the peripheral sector of the complex. [4Fe-4S] cluster serves as cofactor.

It is found in the cell inner membrane. The enzyme catalyses a quinone + NADH + 5 H(+)(in) = a quinol + NAD(+) + 4 H(+)(out). Its function is as follows. NDH-1 shuttles electrons from NADH, via FMN and iron-sulfur (Fe-S) centers, to quinones in the respiratory chain. Couples the redox reaction to proton translocation (for every two electrons transferred, four hydrogen ions are translocated across the cytoplasmic membrane), and thus conserves the redox energy in a proton gradient. This chain is NADH-quinone oxidoreductase subunit B, found in Nitrosomonas europaea (strain ATCC 19718 / CIP 103999 / KCTC 2705 / NBRC 14298).